We begin with the raw amino-acid sequence, 154 residues long: Ribosome maturation factor RimP (154 aa).

Belongs to the RimP family.

The protein resides in the cytoplasm. Functionally, required for maturation of 30S ribosomal subunits. The sequence is that of Ribosome maturation factor RimP from Haemophilus ducreyi (strain 35000HP / ATCC 700724).